The chain runs to 79 residues: Small integral membrane protein 40 (79 aa).

A helical membrane pass occupies residues 35–55 (FFIFLALFLTLLMLEAAYKLL).

The protein localises to the membrane. This chain is Small integral membrane protein 40, found in Homo sapiens (Human).